The primary structure comprises 159 residues: Keratin-associated protein 6-2 (159 aa).

The segment at 11–147 (GYGCGYGSGY…SYYRSGCCGY (137 aa)) is 66 X 2 AA repeats of G-[YCGS].

Belongs to the KRTAP type 6 family. Interacts with hair keratins. In terms of tissue distribution, expressed in skin during two hair growth cycles. Expression restricted to the cortical cells of hair follicles, appearing first in the cortical cells processing the flat nuclei located a few cells above the dermal papilla.

Functionally, in the hair cortex, hair keratin intermediate filaments are embedded in an interfilamentous matrix, consisting of hair keratin-associated proteins (KRTAP), which are essential for the formation of a rigid and resistant hair shaft through their extensive disulfide bond cross-linking with abundant cysteine residues of hair keratins. The matrix proteins include the high-sulfur and high-glycine-tyrosine keratins. The chain is Keratin-associated protein 6-2 from Mus musculus (Mouse).